Consider the following 702-residue polypeptide: Pseudouridylate synthase PUS7L (702 aa).

Serine 79 carries the post-translational modification Phosphoserine. A disordered region spans residues 84–116 (NSEGAADLPGCSDGDRSHQSDSEKENSVNSVTS). Residues 96 to 109 (DGDRSHQSDSEKEN) show a composition bias toward basic and acidic residues. The active-site Nucleophile is the aspartate 339. A TRUD domain is found at 424–646 (GFVNYYGPQR…PGCYRHIVKH (223 aa)).

Belongs to the pseudouridine synthase TruD family.

The enzyme catalyses a uridine in mRNA = a pseudouridine in mRNA. In terms of biological role, pseudouridine synthase that catalyzes pseudouridylation of mRNAs. The chain is Pseudouridylate synthase PUS7L from Mus musculus (Mouse).